The primary structure comprises 209 residues: MHRIDTKTAQKDKFGAGKNGFTRGNPQTGTPATDLDDDYFDMLQEELCSVVEASGASLEKGRHDQLLTALRALLLSRKNPFGDIKSDGTVQTALENLGLGEGAKLNAATATLGRTGFIAIPVMIGGIEQSVIIQWGWNAAKASASGGDGNTVVFPVAFNNACVAVVANYDNVSAPINAVATGGYTTTSFLLRCAAQTGSYYYNWIAIGY.

Basic and acidic residues predominate over residues 1-15; sequence MHRIDTKTAQKDKFG. The tract at residues 1–34 is disordered; it reads MHRIDTKTAQKDKFGAGKNGFTRGNPQTGTPATD. Residues 22 to 31 show a composition bias toward polar residues; that stretch reads TRGNPQTGTP.

This sequence to E.coli YfdL and M.jannaschii MJ0347.

This is an uncharacterized protein from Escherichia coli (strain K12).